A 104-amino-acid chain; its full sequence is L-rhamnose mutarotase (104 aa).

Tyr-18 is a binding site for substrate. The Proton donor role is filled by His-22. Substrate is bound by residues Tyr-41 and 76-77 (WW).

The protein belongs to the rhamnose mutarotase family. Homodimer.

Its subcellular location is the cytoplasm. The catalysed reaction is alpha-L-rhamnose = beta-L-rhamnose. It functions in the pathway carbohydrate metabolism; L-rhamnose metabolism. Functionally, involved in the anomeric conversion of L-rhamnose. The sequence is that of L-rhamnose mutarotase from Salmonella dublin (strain CT_02021853).